We begin with the raw amino-acid sequence, 378 residues long: Ribosomal RNA large subunit methyltransferase G (378 aa).

The protein belongs to the methyltransferase superfamily. RlmG family.

It localises to the cytoplasm. The catalysed reaction is guanosine(1835) in 23S rRNA + S-adenosyl-L-methionine = N(2)-methylguanosine(1835) in 23S rRNA + S-adenosyl-L-homocysteine + H(+). Specifically methylates the guanine in position 1835 (m2G1835) of 23S rRNA. The chain is Ribosomal RNA large subunit methyltransferase G from Enterobacter sp. (strain 638).